The chain runs to 92 residues: MSRSIWKGPFVDGYLLKKADAARASGRNETIKIWSRRSTILPQFVGLTFGVYNGAKHVPVYVSEDMVGHKFGEFSPTRTYYGHAADKKSKRR.

It belongs to the universal ribosomal protein uS19 family.

Its function is as follows. Protein S19 forms a complex with S13 that binds strongly to the 16S ribosomal RNA. The sequence is that of Small ribosomal subunit protein uS19 from Azorhizobium caulinodans (strain ATCC 43989 / DSM 5975 / JCM 20966 / LMG 6465 / NBRC 14845 / NCIMB 13405 / ORS 571).